The chain runs to 231 residues: Uracil-DNA glycosylase (231 aa).

D71 acts as the Proton acceptor in catalysis.

It belongs to the uracil-DNA glycosylase (UDG) superfamily. UNG family.

The protein resides in the cytoplasm. It carries out the reaction Hydrolyzes single-stranded DNA or mismatched double-stranded DNA and polynucleotides, releasing free uracil.. Its function is as follows. Excises uracil residues from the DNA which can arise as a result of misincorporation of dUMP residues by DNA polymerase or due to deamination of cytosine. The sequence is that of Uracil-DNA glycosylase from Pseudomonas aeruginosa (strain UCBPP-PA14).